A 115-amino-acid chain; its full sequence is Parathyroid hormone (115 aa).

Residues 1–25 (MIPAKDMAKVMIVMLAICFLTKSDG) form the signal peptide. Residues 26 to 31 (KSVKKR) constitute a propeptide that is removed on maturation. An important for receptor binding region spans residues 51–69 (RVEWLRKKLQDVHNFVALG). The disordered stretch occupies residues 73-115 (APRDAGSQRPRKKEDNVLVESHEKSLGEADKADVNVLTKAKSQ). Positions 84 to 105 (KKEDNVLVESHEKSLGEADKAD) are enriched in basic and acidic residues.

It belongs to the parathyroid hormone family. In terms of assembly, interacts with PTH1R (via N-terminal extracellular domain).

The protein localises to the secreted. Functionally, parathyroid hormone elevates calcium level by dissolving the salts in bone and preventing their renal excretion. Acts by binding to its receptor, PTH1R, activating G protein-coupled receptor signaling. Stimulates [1-14C]-2-deoxy-D-glucose (2DG) transport and glycogen synthesis in osteoblastic cells. This chain is Parathyroid hormone, found in Homo sapiens (Human).